The sequence spans 664 residues: Transketolase 1 (664 aa).

Substrate is bound at residue histidine 26. Residues histidine 66 and 114–116 (GPL) each bind thiamine diphosphate. Aspartate 155 contributes to the Mg(2+) binding site. Glycine 156 and asparagine 185 together coordinate thiamine diphosphate. Mg(2+) contacts are provided by asparagine 185 and isoleucine 187. Substrate-binding residues include histidine 260, arginine 357, and serine 384. Histidine 260 contributes to the thiamine diphosphate binding site. The active-site Proton donor is the glutamate 411. Phenylalanine 437 is a binding site for thiamine diphosphate. The substrate site is built by histidine 461, aspartate 469, and arginine 520.

This sequence belongs to the transketolase family. As to quaternary structure, homodimer. It depends on Mg(2+) as a cofactor. Ca(2+) serves as cofactor. Requires Mn(2+) as cofactor. Co(2+) is required as a cofactor. The cofactor is thiamine diphosphate.

The enzyme catalyses D-sedoheptulose 7-phosphate + D-glyceraldehyde 3-phosphate = aldehydo-D-ribose 5-phosphate + D-xylulose 5-phosphate. Catalyzes the transfer of a two-carbon ketol group from a ketose donor to an aldose acceptor, via a covalent intermediate with the cofactor thiamine pyrophosphate. In Vibrio vulnificus (strain YJ016), this protein is Transketolase 1 (tkt1).